The sequence spans 519 residues: Flavonoid 8-hydroxylase 2, chloroplastic (519 aa).

Residues 1–46 constitute a chloroplast transit peptide; it reads MEVLQASSLSFQLLRRHSRNNLINKFRNPSLPRIHMPRQNIDLKTF. Residues 77–188 enclose the Rieske domain; the sequence is WYPVASVCDL…SCVRNGIVWF (112 aa). [2Fe-2S] cluster is bound by residues Cys119, His121, Cys139, and His142. His241 and His246 together coordinate Fe cation. Residues 447-450 carry the Redox-active motif motif; it reads CSSC. The next 2 helical transmembrane spans lie at 462 to 478 and 485 to 501; these read IGLQAMSLVFVAMAAAV and YSMVAMAVLSFLASKWL.

The cofactor is [2Fe-2S] cluster. Glandular trichome-specific expression in leaves.

It is found in the plastid. The protein localises to the chloroplast membrane. The protein resides in the cytoplasm. The catalysed reaction is salvigenin + 2 reduced [2Fe-2S]-[ferredoxin] + O2 + 2 H(+) = 8-hydroxysalvigenin + 2 oxidized [2Fe-2S]-[ferredoxin] + H2O. It participates in flavonoid metabolism. Rieske-type, PAO-family oxygenase involved in the biosynthesis of polymethoxylated flavonoids natural products such as nevadensin and salvigenin, aroma compounds which contribute to the flavor of sweet basil, and exhibit pharmacological activities such as anti-allergic, anti-oxidant, antibacterial, anti-proliferative, and anti-inflammatory effects. Catalyzes the hydroxylation of salvigenin to produce 8-hydroxysalvigenin (8-OH-SALV). This chain is Flavonoid 8-hydroxylase 2, chloroplastic, found in Ocimum basilicum (Sweet basil).